Consider the following 118-residue polypeptide: Small ribosomal subunit protein uS13 (118 aa).

The tract at residues 92–118 (RRGLPVRGQRTKTNARTRKGPRKPIKK) is disordered.

The protein belongs to the universal ribosomal protein uS13 family. Part of the 30S ribosomal subunit. Forms a loose heterodimer with protein S19. Forms two bridges to the 50S subunit in the 70S ribosome.

In terms of biological role, located at the top of the head of the 30S subunit, it contacts several helices of the 16S rRNA. In the 70S ribosome it contacts the 23S rRNA (bridge B1a) and protein L5 of the 50S subunit (bridge B1b), connecting the 2 subunits; these bridges are implicated in subunit movement. Contacts the tRNAs in the A and P-sites. The chain is Small ribosomal subunit protein uS13 from Pectobacterium carotovorum subsp. carotovorum (strain PC1).